The chain runs to 737 residues: Alpha-adducin (737 aa).

Met1 carries the post-translational modification N-acetylmethionine. The interval 1-21 (MNGDSRAAVVTSPPPTTAPHK) is disordered. At Ser12 the chain carries Phosphoserine. At Ser59 the chain carries Phosphoserine; by PKA. Ser64 carries the phosphoserine modification. Residue Thr331 is modified to Phosphothreonine. Residues Ser334, Ser353, Ser355, Ser358, and Ser366 each carry the phosphoserine modification. Ser408 carries the phosphoserine; by PKA modification. 2 disordered regions span residues 421–486 (FASD…SAVP) and 576–737 (RREV…KSDS). Ser427 bears the Phosphoserine mark. Phosphothreonine is present on Thr429. Ser431 carries the post-translational modification Phosphoserine. Ser436 is subject to Phosphoserine; by PKA. Phosphothreonine; by ROCK2 is present on Thr445. Ser464 and Ser465 each carry phosphoserine. Thr480 is subject to Phosphothreonine; by ROCK2. Ser481 is modified (phosphoserine; by PKA). Basic and acidic residues predominate over residues 576–601 (RREVERKQKGSEENLDEAREQKEKSP). Ser586, Ser600, and Ser613 each carry phosphoserine. Positions 602–614 (PDQPAVPHPPPST) are enriched in pro residues. Thr614 carries the phosphothreonine modification. Phosphoserine occurs at positions 678, 707, 710, and 714. The segment covering 687-714 (PVAEEAAPSAVEEGAAADPGSDGSPGKS) has biased composition (low complexity). The span at 715–737 (PSKKKKKFRTPSFLKKSKKKSDS) shows a compositional bias: basic residues. At Ser716 the chain carries Phosphoserine; by PKC. Positions 717 to 734 (KKKKKFRTPSFLKKSKKK) are interaction with calmodulin. Phosphoserine; by PKA and PKC is present on Ser726.

This sequence belongs to the aldolase class II family. Adducin subfamily. As to quaternary structure, heterodimer of an alpha and a beta subunit or an alpha and a gamma subunit. In terms of tissue distribution, expressed in all tissues. Found in much higher levels in reticulocytes than the beta subunit.

It is found in the cytoplasm. Its subcellular location is the cytoskeleton. It localises to the cell membrane. In terms of biological role, membrane-cytoskeleton-associated protein that promotes the assembly of the spectrin-actin network. Binds to calmodulin. The polypeptide is Alpha-adducin (ADD1) (Homo sapiens (Human)).